Here is a 495-residue protein sequence, read N- to C-terminus: Carotenoid 3,4-desaturase (495 aa).

This sequence belongs to the carotenoid/retinoid oxidoreductase family.

The enzyme catalyses dihydroisopentenyldehydrorhodopin + A = isopentenyldehydrorhodopin + AH2. It carries out the reaction dihydrobisanhydrobacterioruberin + A = bisanhydrobacterioruberin + AH2. Its pathway is carotenoid biosynthesis. Its function is as follows. Involved in the biosynthesis of the acyclic C50 carotenoid bacterioruberin (BR). CrtD is involved in the desaturation reactions that form double bonds at C-3,4 of dihydroisopentenyldehydrorhodopin (DH-IDR) and C-3',4' of dihydrobisanhydrobacterioruberin (DH-BABR) to yield isopentenyld ehydrorhodopin (IDR) and bisanhydrobacterioruberin (BABR), respectively. This chain is Carotenoid 3,4-desaturase, found in Haloarcula japonica (strain ATCC 49778 / DSM 6131 / JCM 7785 / NBRC 101032 / NCIMB 13157 / TR-1).